Reading from the N-terminus, the 682-residue chain is DNA-directed RNA polymerase subunit beta' (682 aa).

C69, C71, C87, and C90 together coordinate Zn(2+). Mg(2+) is bound by residues D489, D491, and D493.

Belongs to the RNA polymerase beta' chain family. RpoC1 subfamily. As to quaternary structure, in plastids the minimal PEP RNA polymerase catalytic core is composed of four subunits: alpha, beta, beta', and beta''. When a (nuclear-encoded) sigma factor is associated with the core the holoenzyme is formed, which can initiate transcription. It depends on Mg(2+) as a cofactor. Zn(2+) serves as cofactor.

The protein localises to the plastid. It is found in the chloroplast. It carries out the reaction RNA(n) + a ribonucleoside 5'-triphosphate = RNA(n+1) + diphosphate. Functionally, DNA-dependent RNA polymerase catalyzes the transcription of DNA into RNA using the four ribonucleoside triphosphates as substrates. The sequence is that of DNA-directed RNA polymerase subunit beta' from Acorus gramineus (Dwarf sweet flag).